Consider the following 215-residue polypeptide: Fibrillarin-like rRNA/tRNA 2'-O-methyltransferase (215 aa).

The segment at 1 to 29 (MKASSSLPDGVQRRQFDNRSRLTTHGTTV) is disordered. A compositionally biased stretch (basic and acidic residues) spans 11-20 (VQRRQFDNRS). Residues 76–77 (TT), 92–93 (EF), 117–118 (DA), and 138–141 (DVAT) contribute to the S-adenosyl-L-methionine site.

It belongs to the methyltransferase superfamily. Fibrillarin family. As to quaternary structure, interacts with nop5. Component of box C/D small ribonucleoprotein (sRNP) particles that contain rpl7ae, FlpA and nop5, plus a guide RNA.

Involved in pre-rRNA and tRNA processing. Utilizes the methyl donor S-adenosyl-L-methionine to catalyze the site-specific 2'-hydroxyl methylation of ribose moieties in rRNA and tRNA. Site specificity is provided by a guide RNA that base pairs with the substrate. Methylation occurs at a characteristic distance from the sequence involved in base pairing with the guide RNA. This chain is Fibrillarin-like rRNA/tRNA 2'-O-methyltransferase, found in Haloquadratum walsbyi (strain DSM 16790 / HBSQ001).